Reading from the N-terminus, the 78-residue chain is Small ribosomal subunit protein bS18 (78 aa).

The protein belongs to the bacterial ribosomal protein bS18 family. Part of the 30S ribosomal subunit. Forms a tight heterodimer with protein bS6.

In terms of biological role, binds as a heterodimer with protein bS6 to the central domain of the 16S rRNA, where it helps stabilize the platform of the 30S subunit. This is Small ribosomal subunit protein bS18 from Pseudothermotoga lettingae (strain ATCC BAA-301 / DSM 14385 / NBRC 107922 / TMO) (Thermotoga lettingae).